The sequence spans 80 residues: Pancreatic polypeptide (80 aa).

A signal peptide spans 1-25; the sequence is MPPRWASLLLLACSLLLLAVPPGTA. At tyrosine 61 the chain carries Tyrosine amide. Residues 65–80 constitute a propeptide that is removed on maturation; sequence SSSRVLCEEPMGAAGC.

This sequence belongs to the NPY family.

It localises to the secreted. Hormone secreted by pancreatic cells that acts as a regulator of pancreatic and gastrointestinal functions. This is Pancreatic polypeptide (PPY) from Gallus gallus (Chicken).